Reading from the N-terminus, the 397-residue chain is DnaJ homolog subfamily A member 4 (397 aa).

The 67-residue stretch at 4–70 (ETQYYDILGV…RDVYDQGGEQ (67 aa)) folds into the J domain. Ser18 is modified (phosphoserine). The segment at 122–206 (GVTKKLALQK…CSGAKVIREK (85 aa)) adopts a CR-type zinc-finger fold. 8 residues coordinate Zn(2+): Cys135, Cys138, Cys151, Cys154, Cys178, Cys181, Cys194, and Cys197. CXXCXGXG motif repeat units follow at residues 135 to 142 (CEKCEGVG), 151 to 158 (CPLCKGRG), 178 to 185 (CIECKGQG), and 194 to 201 (CESCSGAK). Cys394 is subject to Cysteine methyl ester. Cys394 carries S-farnesyl cysteine lipidation. Positions 395 to 397 (QTA) are cleaved as a propeptide — removed in mature form.

The protein localises to the membrane. The polypeptide is DnaJ homolog subfamily A member 4 (DNAJA4) (Homo sapiens (Human)).